The chain runs to 409 residues: MATSVGHRCLGLLHGVAPWRSSLHPCEITALSQSLQPLRKLPFRAFRTDARKIHTAPARTMFLLRPVPILLATGGGYAGYRQYEKYRERELEKLGLEIPPKLAGHWEVALYKSVPTRLLSRAWGRLNQVELPHWLRRPVYSLYIWTFGVNMKEAAVEDLHHYRNLSEFFRRKLKPQARPVCGLHSVISPSDGRILNFGQVKNCEVEQVKGVTYSLESFLGPRTCTEDLPFPPATSCDSFKNQLVTREGNELYHCVIYLAPGDYHCFHSPTDWTVSHRRHFPGSLMSVNPGMARWIKELFCHNERVVLTGDWKHGFFSLTAVGATNVGSIRIYFDQDLHTNSPRHSKGSYNDFSFVTHTNREGVPMRKGEHLGEFNLGSTIVLIFEAPKDFNFQLKTGQKIRFGEALGSL.

The N-terminal 52 residues, M1 to K52, are a transit peptide targeting the mitochondrion. At I53 to L63 the chain is on the mitochondrial matrix side. A helical transmembrane segment spans residues L64–Q82. The Mitochondrial intermembrane portion of the chain corresponds to Y83 to L409. Catalysis depends on charge relay system; for autoendoproteolytic cleavage activity residues D191, H267, and S378. S378 (schiff-base intermediate with substrate; via pyruvic acid; for decarboxylase activity) is an active-site residue. S378 carries the pyruvic acid (Ser); by autocatalysis modification.

The protein belongs to the phosphatidylserine decarboxylase family. PSD-B subfamily. Eukaryotic type I sub-subfamily. As to quaternary structure, heterodimer of a large membrane-associated beta subunit and a small pyruvoyl-containing alpha subunit. Requires pyruvate as cofactor. Is synthesized initially as an inactive proenzyme. Formation of the active enzyme involves a self-maturation process in which the active site pyruvoyl group is generated from an internal serine residue via an autocatalytic post-translational modification. Two non-identical subunits are generated from the proenzyme in this reaction, and the pyruvate is formed at the N-terminus of the alpha chain, which is derived from the carboxyl end of the proenzyme. The autoendoproteolytic cleavage occurs by a canonical serine protease mechanism, in which the side chain hydroxyl group of the serine supplies its oxygen atom to form the C-terminus of the beta chain, while the remainder of the serine residue undergoes an oxidative deamination to produce ammonia and the pyruvoyl prosthetic group on the alpha chain. During this reaction, the Ser that is part of the protease active site of the proenzyme becomes the pyruvoyl prosthetic group, which constitutes an essential element of the active site of the mature decarboxylase.

It is found in the mitochondrion inner membrane. Its subcellular location is the lipid droplet. It localises to the cytoplasm. It carries out the reaction a 1,2-diacyl-sn-glycero-3-phospho-L-serine + H(+) = a 1,2-diacyl-sn-glycero-3-phosphoethanolamine + CO2. It participates in phospholipid metabolism; phosphatidylethanolamine biosynthesis. Its function is as follows. Catalyzes the formation of phosphatidylethanolamine (PtdEtn) from phosphatidylserine (PtdSer). Plays a central role in phospholipid metabolism and in the interorganelle trafficking of phosphatidylserine. May be involved in lipid droplet biogenesis at the endoplasmic reticulum membrane. In Pongo abelii (Sumatran orangutan), this protein is Phosphatidylserine decarboxylase proenzyme, mitochondrial.